The sequence spans 83 residues: Insect toxin 2-13 (83 aa).

The signal sequence occupies residues 1 to 21; sequence MKLLLLLIITASMLIEGLVNA. The LCN-type CS-alpha/beta domain maps to 22–80; sequence DVYIRRHDGCKISCTVNDKYCDNECKSEGGSYGYCYAFGCWCEGLPNDKAWKSETNTCG. 4 disulfides stabilise this stretch: Cys31–Cys79, Cys35–Cys56, Cys42–Cys61, and Cys46–Cys63. Gly80 carries the glycine amide modification.

It belongs to the long (4 C-C) scorpion toxin superfamily. Sodium channel inhibitor family. Beta subfamily. Expressed by the venom gland.

Its subcellular location is the secreted. In terms of biological role, depressant insect toxins cause a transient contraction paralysis followed by a slow flaccid paralysis. They bind voltage-independently to sodium channels (Nav) and block action potentials, primarily by depolarizing the axonal membrane and suppressing the sodium current. The chain is Insect toxin 2-13 from Leiurus hebraeus (Hebrew deathstalker scorpion).